A 122-amino-acid chain; its full sequence is Acidic phospholipase A2 5 (122 aa).

Cystine bridges form between cysteine 26-cysteine 115, cysteine 28-cysteine 44, cysteine 43-cysteine 95, cysteine 49-cysteine 122, cysteine 50-cysteine 88, cysteine 57-cysteine 81, and cysteine 75-cysteine 86. The Ca(2+) site is built by phenylalanine 27, glycine 29, and glycine 31. Histidine 47 is an active-site residue. Aspartate 48 serves as a coordination point for Ca(2+). Aspartate 89 is a catalytic residue.

It belongs to the phospholipase A2 family. Group II subfamily. D49 sub-subfamily. As to quaternary structure, monomer (predominant). Non-covalently linked homodimers are also observed. Ca(2+) is required as a cofactor. Expressed by the venom gland.

The protein resides in the secreted. The enzyme catalyses a 1,2-diacyl-sn-glycero-3-phosphocholine + H2O = a 1-acyl-sn-glycero-3-phosphocholine + a fatty acid + H(+). With respect to regulation, preincubation with heparin slightly increase the enzymatic activity. Functionally, snake venom phospholipase A2 (PLA2) that inhibits platelet aggregation induced by ADP, arachidonic acid and PAF. Acts in a enzymatic independent manner on a proteinase-activated receptor (PAR1, F2R) to evoke calcium release through the inositol 1,4,5-trisphosphate receptor (ITPR1, IP3R) and induces mouse aorta contraction. PAR1, phospholipase C and IP3R inhibitors suppress PA2-induced aorta contraction. PLA2 catalyzes the calcium-dependent hydrolysis of the 2-acyl groups in 3-sn-phosphoglycerides. The chain is Acidic phospholipase A2 5 from Trimeresurus stejnegeri (Chinese green tree viper).